Here is a 251-residue protein sequence, read N- to C-terminus: Cytochrome c oxidase subunit 2 (251 aa).

The first 15 residues, 1 to 15, serve as a signal peptide directing secretion; that stretch reads MLNLLYNQIFNVILN. Over 16–41 the chain is Mitochondrial intermembrane; the sequence is DVPTPYNTYFQDSATPNQEGILELHD. Residues 42–62 form a helical membrane-spanning segment; the sequence is NIMFYLLVILGLVSWLLFTIT. Residues 63–82 are Mitochondrial matrix-facing; sequence RTYSKNPIAYKYIKHGQTIE. The chain crosses the membrane as a helical span at residues 83–103; it reads IIWTIFPAVILLIIAFPSFIL. The Mitochondrial intermembrane segment spans residues 104–251; it reads LYLCDEVISP…PAFLEWLNEQ (148 aa). The Cu cation site is built by His186, Cys221, Glu223, Cys225, His229, and Met232. Glu223 is a Mg(2+) binding site.

Belongs to the cytochrome c oxidase subunit 2 family. Component of the cytochrome c oxidase (complex IV, CIV), a multisubunit enzyme composed of a catalytic core of 3 subunits and several supernumerary subunits. The complex exists as a monomer or a dimer and forms supercomplexes (SCs) in the inner mitochondrial membrane with ubiquinol-cytochrome c oxidoreductase (cytochrome b-c1 complex, complex III, CIII). The cofactor is Cu cation. In terms of processing, the signal sequence of COX2 is processed by IMP1.

The protein localises to the mitochondrion inner membrane. The catalysed reaction is 4 Fe(II)-[cytochrome c] + O2 + 8 H(+)(in) = 4 Fe(III)-[cytochrome c] + 2 H2O + 4 H(+)(out). Functionally, component of the cytochrome c oxidase, the last enzyme in the mitochondrial electron transport chain which drives oxidative phosphorylation. The respiratory chain contains 3 multisubunit complexes succinate dehydrogenase (complex II, CII), ubiquinol-cytochrome c oxidoreductase (cytochrome b-c1 complex, complex III, CIII) and cytochrome c oxidase (complex IV, CIV), that cooperate to transfer electrons derived from NADH and succinate to molecular oxygen, creating an electrochemical gradient over the inner membrane that drives transmembrane transport and the ATP synthase. Cytochrome c oxidase is the component of the respiratory chain that catalyzes the reduction of oxygen to water. Electrons originating from reduced cytochrome c in the intermembrane space (IMS) are transferred via the dinuclear copper A center (CU(A)) of subunit 2 and heme A of subunit 1 to the active site in subunit 1, a binuclear center (BNC) formed by heme A3 and copper B (CU(B)). The BNC reduces molecular oxygen to 2 water molecules using 4 electrons from cytochrome c in the IMS and 4 protons from the mitochondrial matrix. The polypeptide is Cytochrome c oxidase subunit 2 (COX2) (Lachancea thermotolerans (strain ATCC 56472 / CBS 6340 / NRRL Y-8284) (Yeast)).